Consider the following 298-residue polypeptide: Epimerase family protein SSP1921 (298 aa).

This sequence belongs to the NAD(P)-dependent epimerase/dehydratase family. SDR39U1 subfamily.

The protein is Epimerase family protein SSP1921 of Staphylococcus saprophyticus subsp. saprophyticus (strain ATCC 15305 / DSM 20229 / NCIMB 8711 / NCTC 7292 / S-41).